Here is a 348-residue protein sequence, read N- to C-terminus: Holliday junction branch migration complex subunit RuvB (348 aa).

Positions 4-184 (ADRLIAASGR…FGIVQRLEFY (181 aa)) are large ATPase domain (RuvB-L). ATP contacts are provided by residues I23, R24, G65, K68, T69, T70, 131-133 (EDF), R174, Y184, and R221. T69 contacts Mg(2+). The interval 185–255 (NDKDLSTIVS…VADMALNLLD (71 aa)) is small ATPAse domain (RuvB-S). A head domain (RuvB-H) region spans residues 258 to 348 (ERGFDHSDRR…GGDFSEPGDE (91 aa)). The DNA site is built by R294, R313, and R318.

This sequence belongs to the RuvB family. Homohexamer. Forms an RuvA(8)-RuvB(12)-Holliday junction (HJ) complex. HJ DNA is sandwiched between 2 RuvA tetramers; dsDNA enters through RuvA and exits via RuvB. An RuvB hexamer assembles on each DNA strand where it exits the tetramer. Each RuvB hexamer is contacted by two RuvA subunits (via domain III) on 2 adjacent RuvB subunits; this complex drives branch migration. In the full resolvosome a probable DNA-RuvA(4)-RuvB(12)-RuvC(2) complex forms which resolves the HJ.

The protein localises to the cytoplasm. It carries out the reaction ATP + H2O = ADP + phosphate + H(+). In terms of biological role, the RuvA-RuvB-RuvC complex processes Holliday junction (HJ) DNA during genetic recombination and DNA repair, while the RuvA-RuvB complex plays an important role in the rescue of blocked DNA replication forks via replication fork reversal (RFR). RuvA specifically binds to HJ cruciform DNA, conferring on it an open structure. The RuvB hexamer acts as an ATP-dependent pump, pulling dsDNA into and through the RuvAB complex. RuvB forms 2 homohexamers on either side of HJ DNA bound by 1 or 2 RuvA tetramers; 4 subunits per hexamer contact DNA at a time. Coordinated motions by a converter formed by DNA-disengaged RuvB subunits stimulates ATP hydrolysis and nucleotide exchange. Immobilization of the converter enables RuvB to convert the ATP-contained energy into a lever motion, pulling 2 nucleotides of DNA out of the RuvA tetramer per ATP hydrolyzed, thus driving DNA branch migration. The RuvB motors rotate together with the DNA substrate, which together with the progressing nucleotide cycle form the mechanistic basis for DNA recombination by continuous HJ branch migration. Branch migration allows RuvC to scan DNA until it finds its consensus sequence, where it cleaves and resolves cruciform DNA. This Pseudomonas putida (strain ATCC 47054 / DSM 6125 / CFBP 8728 / NCIMB 11950 / KT2440) protein is Holliday junction branch migration complex subunit RuvB.